Consider the following 88-residue polypeptide: Sec-independent protein translocase protein TatA (88 aa).

The chain crosses the membrane as a helical span at residues 1–21 (MGSIGWAQLLIIAVIVVLLFG). Residues 41–88 (KAMGDDSQTPPTNVDKTSNDADFAKSITEKQQPVAKAEESKSHEKEQG) are disordered. The span at 46-56 (DSQTPPTNVDK) shows a compositional bias: polar residues. Basic and acidic residues predominate over residues 76-88 (KAEESKSHEKEQG).

It belongs to the TatA/E family. The Tat system comprises two distinct complexes: a TatABC complex, containing multiple copies of TatA, TatB and TatC subunits, and a separate TatA complex, containing only TatA subunits. Substrates initially bind to the TatABC complex, which probably triggers association of the separate TatA complex to form the active translocon.

The protein resides in the cell inner membrane. Functionally, part of the twin-arginine translocation (Tat) system that transports large folded proteins containing a characteristic twin-arginine motif in their signal peptide across membranes. TatA could form the protein-conducting channel of the Tat system. This Yersinia pestis protein is Sec-independent protein translocase protein TatA.